Consider the following 1071-residue polypeptide: Carbamoyl phosphate synthase large chain (1071 aa).

The interval 1-403 is carboxyphosphate synthetic domain; that stretch reads MPKRTDLKSI…SFQKALRGLE (403 aa). Residues 133 to 328 enclose the ATP-grasp 1 domain; the sequence is KEAMEKIGLS…IAKVAANWAV (196 aa). ATP-binding residues include arginine 169, glycine 175, glycine 176, glutamine 208, valine 210, glutamate 215, glycine 241, valine 242, histidine 243, glutamine 285, and glutamate 299. Residues glutamine 285, glutamate 299, and asparagine 301 each contribute to the Mg(2+) site. 3 residues coordinate Mn(2+): glutamine 285, glutamate 299, and asparagine 301. Residues 404–548 form an oligomerization domain region; that stretch reads TGLCGFNPAR…YSTYEEECES (145 aa). The interval 549 to 930 is carbamoyl phosphate synthetic domain; the sequence is RPSDRKKVMI…AYYKAQLGAG (382 aa). The ATP-grasp 2 domain maps to 673–864; that stretch reads QKVLNDLGLR…LAKVGARCMA (192 aa). Residues arginine 709, phenylalanine 748, leucine 750, glutamate 755, glycine 780, isoleucine 781, histidine 782, serine 783, glutamine 823, and glutamate 835 each contribute to the ATP site. Residues glutamine 823, glutamate 835, and asparagine 837 each contribute to the Mg(2+) site. Mn(2+) is bound by residues glutamine 823, glutamate 835, and asparagine 837. The MGS-like domain occupies 931-1071; sequence ERLNPTGKIF…ELHGRLKNRN (141 aa). The tract at residues 931–1071 is allosteric domain; it reads ERLNPTGKIF…ELHGRLKNRN (141 aa).

Belongs to the CarB family. In terms of assembly, composed of two chains; the small (or glutamine) chain promotes the hydrolysis of glutamine to ammonia, which is used by the large (or ammonia) chain to synthesize carbamoyl phosphate. Tetramer of heterodimers (alpha,beta)4. Mg(2+) serves as cofactor. Mn(2+) is required as a cofactor.

It catalyses the reaction hydrogencarbonate + L-glutamine + 2 ATP + H2O = carbamoyl phosphate + L-glutamate + 2 ADP + phosphate + 2 H(+). It carries out the reaction hydrogencarbonate + NH4(+) + 2 ATP = carbamoyl phosphate + 2 ADP + phosphate + 2 H(+). It functions in the pathway amino-acid biosynthesis; L-arginine biosynthesis; carbamoyl phosphate from bicarbonate: step 1/1. The protein operates within pyrimidine metabolism; UMP biosynthesis via de novo pathway; (S)-dihydroorotate from bicarbonate: step 1/3. Its function is as follows. Large subunit of the glutamine-dependent carbamoyl phosphate synthetase (CPSase). CPSase catalyzes the formation of carbamoyl phosphate from the ammonia moiety of glutamine, carbonate, and phosphate donated by ATP, constituting the first step of 2 biosynthetic pathways, one leading to arginine and/or urea and the other to pyrimidine nucleotides. The large subunit (synthetase) binds the substrates ammonia (free or transferred from glutamine from the small subunit), hydrogencarbonate and ATP and carries out an ATP-coupled ligase reaction, activating hydrogencarbonate by forming carboxy phosphate which reacts with ammonia to form carbamoyl phosphate. In Neisseria gonorrhoeae, this protein is Carbamoyl phosphate synthase large chain.